Here is a 226-residue protein sequence, read N- to C-terminus: Triosephosphate isomerase (226 aa).

Residue 10-12 (NFK) participates in substrate binding. His-96 acts as the Electrophile in catalysis. Catalysis depends on Glu-144, which acts as the Proton acceptor. Residues Ile-149, Gly-184, and 205-206 (AS) contribute to the substrate site.

The protein belongs to the triosephosphate isomerase family. In terms of assembly, homotetramer; dimer of dimers.

It localises to the cytoplasm. It catalyses the reaction D-glyceraldehyde 3-phosphate = dihydroxyacetone phosphate. It participates in carbohydrate biosynthesis; gluconeogenesis. The protein operates within carbohydrate degradation; glycolysis; D-glyceraldehyde 3-phosphate from glycerone phosphate: step 1/1. In terms of biological role, involved in the gluconeogenesis. Catalyzes stereospecifically the conversion of dihydroxyacetone phosphate (DHAP) to D-glyceraldehyde-3-phosphate (G3P). In Methanopyrus kandleri (strain AV19 / DSM 6324 / JCM 9639 / NBRC 100938), this protein is Triosephosphate isomerase.